The following is a 453-amino-acid chain: tRNA modification GTPase MnmE (453 aa).

3 residues coordinate (6S)-5-formyl-5,6,7,8-tetrahydrofolate: arginine 22, glutamate 79, and lysine 119. Residues 215 to 376 form the TrmE-type G domain; the sequence is GMKVVIAGRP…LKLHLKSLMG (162 aa). Asparagine 225 contributes to the K(+) binding site. GTP contacts are provided by residues 225-230, 244-250, 269-272, and 334-337; these read NAGKSS, TEIAGTT, DTAG, and NKAD. Serine 229 is a Mg(2+) binding site. 3 residues coordinate K(+): threonine 244, isoleucine 246, and threonine 249. Residue threonine 250 participates in Mg(2+) binding. Residue lysine 453 participates in (6S)-5-formyl-5,6,7,8-tetrahydrofolate binding.

This sequence belongs to the TRAFAC class TrmE-Era-EngA-EngB-Septin-like GTPase superfamily. TrmE GTPase family. Homodimer. Heterotetramer of two MnmE and two MnmG subunits. Requires K(+) as cofactor.

It is found in the cytoplasm. Functionally, exhibits a very high intrinsic GTPase hydrolysis rate. Involved in the addition of a carboxymethylaminomethyl (cmnm) group at the wobble position (U34) of certain tRNAs, forming tRNA-cmnm(5)s(2)U34. This Shewanella sp. (strain W3-18-1) protein is tRNA modification GTPase MnmE.